The following is a 323-amino-acid chain: Galactosylgalactosylxylosylprotein 3-beta-glucuronosyltransferase 2 (323 aa).

Topologically, residues 1 to 2 (MK) are cytoplasmic. A helical; Signal-anchor for type II membrane protein transmembrane segment spans residues 3-23 (SALFTRFFILLPWILIVIIML). Residues 24–323 (DVDTRRPVPP…YHLDTVKIEV (300 aa)) are Lumenal-facing. The tract at residues 51-80 (RLPLRRGGPAHGTQKRNQSRPQPQPEPQLP) is disordered. The N-linked (GlcNAc...) asparagine glycan is linked to Asn67. UDP-alpha-D-glucuronate contacts are provided by residues 87-89 (PTY), Asp118, Arg155, Arg160, and 185-187 (DDD). Asp187 contacts Mn(2+). Residues 234–243 (WRADRPFAID) form an interaction with galactose moiety of substrate glycoprotein region. Glu273 functions as the Proton donor/acceptor in the catalytic mechanism. A glycan (N-linked (GlcNAc...) asparagine) is linked at Asn292. A UDP-alpha-D-glucuronate-binding site is contributed by 300–302 (HTR).

This sequence belongs to the glycosyltransferase 43 family. As to quaternary structure, homodimer. It depends on Mn(2+) as a cofactor. As to expression, expressed in the trachea, retina, spinal cord, hippocampus and other brain regions, and, at lower levels, in testis and ovary.

The protein resides in the golgi apparatus membrane. The enzyme catalyses 3-O-(beta-D-galactosyl-(1-&gt;3)-beta-D-galactosyl-(1-&gt;4)-beta-D-xylosyl)-L-seryl-[protein] + UDP-alpha-D-glucuronate = 3-O-(beta-D-GlcA-(1-&gt;3)-beta-D-Gal-(1-&gt;3)-beta-D-Gal-(1-&gt;4)-beta-D-Xyl)-L-seryl-[protein] + UDP + H(+). The protein operates within protein modification; protein glycosylation. Functionally, involved in the biosynthesis of L2/HNK-1 carbohydrate epitope on both glycolipids and glycoproteins. The sequence is that of Galactosylgalactosylxylosylprotein 3-beta-glucuronosyltransferase 2 (B3GAT2) from Homo sapiens (Human).